We begin with the raw amino-acid sequence, 106 residues long: Iron-sulfur cluster assembly protein CyaY (106 aa).

It belongs to the frataxin family.

Its function is as follows. Involved in iron-sulfur (Fe-S) cluster assembly. May act as a regulator of Fe-S biogenesis. This is Iron-sulfur cluster assembly protein CyaY from Escherichia fergusonii (strain ATCC 35469 / DSM 13698 / CCUG 18766 / IAM 14443 / JCM 21226 / LMG 7866 / NBRC 102419 / NCTC 12128 / CDC 0568-73).